Consider the following 191-residue polypeptide: MEVILLERIAKLGQMGETVKVRDGFARNYLLPLGKALRANAANKARFESERSTLEARNLERKSEAQKVADSLDGKSFIIVRSAGETGQLYGSVAARDIVETLAAEGFNINRNQVDLNQPIKAIGLHKVTLHLHGEVDVAIEINVARSAEEAERQAKGESLTSADAIYGVDEDALKPEDFFNPEAELESEEE.

Positions 171-191 are disordered; the sequence is EDALKPEDFFNPEAELESEEE.

This sequence belongs to the bacterial ribosomal protein bL9 family.

In terms of biological role, binds to the 23S rRNA. The sequence is that of Large ribosomal subunit protein bL9 from Rhizobium meliloti (strain 1021) (Ensifer meliloti).